A 179-amino-acid polypeptide reads, in one-letter code: ATP synthase subunit delta (179 aa).

Belongs to the ATPase delta chain family. In terms of assembly, F-type ATPases have 2 components, F(1) - the catalytic core - and F(0) - the membrane proton channel. F(1) has five subunits: alpha(3), beta(3), gamma(1), delta(1), epsilon(1). F(0) has three main subunits: a(1), b(2) and c(10-14). The alpha and beta chains form an alternating ring which encloses part of the gamma chain. F(1) is attached to F(0) by a central stalk formed by the gamma and epsilon chains, while a peripheral stalk is formed by the delta and b chains.

The protein resides in the cell inner membrane. F(1)F(0) ATP synthase produces ATP from ADP in the presence of a proton or sodium gradient. F-type ATPases consist of two structural domains, F(1) containing the extramembraneous catalytic core and F(0) containing the membrane proton channel, linked together by a central stalk and a peripheral stalk. During catalysis, ATP synthesis in the catalytic domain of F(1) is coupled via a rotary mechanism of the central stalk subunits to proton translocation. In terms of biological role, this protein is part of the stalk that links CF(0) to CF(1). It either transmits conformational changes from CF(0) to CF(1) or is implicated in proton conduction. In Burkholderia pseudomallei (strain 1710b), this protein is ATP synthase subunit delta.